Here is a 930-residue protein sequence, read N- to C-terminus: Translation initiation factor IF-2 (930 aa).

The interval 29-316 (GEFVKSASST…GRKSKRAKRA (288 aa)) is disordered. The segment covering 81–120 (RPGPKPGPPVAQQPAAPAAPPAAPPAPPTPAAAPPSPAPA) has biased composition (pro residues). A compositionally biased stretch (low complexity) spans 121–135 (APAAATPAEPAAPSA). Composition is skewed to pro residues over residues 136-155 (RPGP…PGAP) and 180-191 (PRPQGPGGPRPG). The segment covering 192–204 (PGAGGPRPGGGPR) has biased composition (gly residues). The span at 228–240 (GGGPRPGGGPRPT) shows a compositional bias: pro residues. Positions 241–301 (PGGAGRPGGG…GAAGAFGRPG (61 aa)) are enriched in gly residues. Positions 305-314 (KRGRKSKRAK) are enriched in basic residues. Residues 426 to 598 (IRPPVVTVMG…VILTADASLD (173 aa)) form the tr-type G domain. Residues 435 to 442 (GHVDHGKT) form a G1 region. Position 435–442 (435–442 (GHVDHGKT)) interacts with GTP. The tract at residues 460-464 (GITQH) is G2. The G3 stretch occupies residues 485–488 (DTPG). GTP contacts are provided by residues 485 to 489 (DTPGH) and 539 to 542 (NKID). The segment at 539–542 (NKID) is G4. Residues 575-577 (SAK) are G5.

The protein belongs to the TRAFAC class translation factor GTPase superfamily. Classic translation factor GTPase family. IF-2 subfamily.

It is found in the cytoplasm. In terms of biological role, one of the essential components for the initiation of protein synthesis. Protects formylmethionyl-tRNA from spontaneous hydrolysis and promotes its binding to the 30S ribosomal subunits. Also involved in the hydrolysis of GTP during the formation of the 70S ribosomal complex. The chain is Translation initiation factor IF-2 from Mycolicibacterium vanbaalenii (strain DSM 7251 / JCM 13017 / BCRC 16820 / KCTC 9966 / NRRL B-24157 / PYR-1) (Mycobacterium vanbaalenii).